Reading from the N-terminus, the 75-residue chain is Translation initiation factor IF-1, chloroplastic (75 aa).

The protein belongs to the IF-1 family. As to quaternary structure, component of the 30S ribosomal translation pre-initiation complex which assembles on the 30S ribosome in the order IF-2 and IF-3, IF-1 and N-formylmethionyl-tRNA(fMet); mRNA recruitment can occur at any time during PIC assembly.

It is found in the plastid. The protein resides in the chloroplast. Its function is as follows. One of the essential components for the initiation of protein synthesis. Stabilizes the binding of IF-2 and IF-3 on the 30S subunit to which N-formylmethionyl-tRNA(fMet) subsequently binds. Helps modulate mRNA selection, yielding the 30S pre-initiation complex (PIC). Upon addition of the 50S ribosomal subunit IF-1, IF-2 and IF-3 are released leaving the mature 70S translation initiation complex. This chain is Translation initiation factor IF-1, chloroplastic (infA), found in Cucumis sativus (Cucumber).